Reading from the N-terminus, the 398-residue chain is Cathepsin E (398 aa).

The signal sequence occupies residues 1–21; that stretch reads MKPLFVLLLLLLLLDLAQAQG. Positions 22–58 are cleaved as a propeptide — activation peptide; the sequence is VLHRVPLRRHQSLRKKLRAQGQLSDFWRSHNLDMIEF. The 315-residue stretch at 80-394 folds into the Peptidase A1 domain; the sequence is YFGTVSIGSP…DRGNNQVGLA (315 aa). N-linked (GlcNAc...) asparagine glycosylation is present at asparagine 92. The active site involves aspartate 98. 2 cysteine pairs are disulfide-bonded: cysteine 111/cysteine 116 and cysteine 274/cysteine 278. Residue aspartate 283 is part of the active site.

The protein belongs to the peptidase A1 family. As to quaternary structure, homodimer; disulfide-linked. Glycosylated. The nature of the carbohydrate chain varies between cell types. In brain microglia, the proenzyme contains a high mannose-type oligosaccharide, while the mature enzyme contains a complex-type oligosaccharide. In stomach and spleen, the mature enzyme contains a high mannose-type oligosaccharide. In erythrocyte membranes, the mature enzyme contains a complex-type oligosaccharide. Expressed abundantly in lymphocytes and macrophages of the thymus and spleen, and in the M cells of the intestine. In the brain, expression is limited to reactive microglial cells, the large pyrimidial neurons in the cerebral cortex, the CA1 and CA3 pyrimidial neurons of the hippocampus, the large neurons of the neostriatum, and the Purkinje neurons of the cerebellum.

It is found in the endosome. It carries out the reaction Similar to cathepsin D, but slightly broader specificity.. Its function is as follows. May have a role in immune function. Probably involved in the processing of antigenic peptides during MHC class II-mediated antigen presentation. May play a role in activation-induced lymphocyte depletion in the thymus, and in neuronal degeneration and glial cell activation in the brain. The sequence is that of Cathepsin E (Ctse) from Rattus norvegicus (Rat).